The following is a 424-amino-acid chain: Homeobox even-skipped homolog protein 2 (424 aa).

2 disordered regions span residues 18 to 65 and 132 to 178; these read PAGK…DTPT and TTQL…GPDQ. Composition is skewed to polar residues over residues 50 to 65 and 132 to 145; these read RPTS…DTPT and TTQL…VYSD. Positions 146–175 are enriched in low complexity; the sequence is NGSSTNTSSNGSNITNLNGNSSSIGNSGSG. Positions 179–238 form a DNA-binding region, homeobox; that stretch reads VRRYRTAFTREQIGRLEKEFYRENYVSRPRRCELAAALNLPETTIKVWFQNRRMKDKRQR.

This sequence belongs to the even-skipped homeobox family.

The protein localises to the nucleus. This Heterodontus francisci (Horn shark) protein is Homeobox even-skipped homolog protein 2 (EVX2).